A 152-amino-acid chain; its full sequence is Endoribonuclease YbeY (152 aa).

Zn(2+)-binding residues include His113, His117, and His123.

The protein belongs to the endoribonuclease YbeY family. It depends on Zn(2+) as a cofactor.

It is found in the cytoplasm. Functionally, single strand-specific metallo-endoribonuclease involved in late-stage 70S ribosome quality control and in maturation of the 3' terminus of the 16S rRNA. The polypeptide is Endoribonuclease YbeY (Acidovorax ebreus (strain TPSY) (Diaphorobacter sp. (strain TPSY))).